The sequence spans 491 residues: Lysine--tRNA ligase 1 (491 aa).

Glu400 and Glu407 together coordinate Mg(2+).

It belongs to the class-II aminoacyl-tRNA synthetase family. As to quaternary structure, homodimer. It depends on Mg(2+) as a cofactor.

It localises to the cytoplasm. It catalyses the reaction tRNA(Lys) + L-lysine + ATP = L-lysyl-tRNA(Lys) + AMP + diphosphate. The polypeptide is Lysine--tRNA ligase 1 (Mycoplasmopsis pulmonis (strain UAB CTIP) (Mycoplasma pulmonis)).